The sequence spans 199 residues: Peroxiredoxin-1 (199 aa).

N-acetylserine is present on serine 2. Positions alanine 6 to phenylalanine 165 constitute a Thioredoxin domain. Residue lysine 7 is modified to N6-acetyllysine; alternate. Lysine 7 participates in a covalent cross-link: Glycyl lysine isopeptide (Lys-Gly) (interchain with G-Cter in SUMO2); alternate. An N6-acetyllysine modification is found at lysine 16. Residue serine 32 is modified to Phosphoserine. Cysteine 52 serves as the catalytic Cysteine sulfenic acid (-SOH) intermediate. Residue threonine 90 is modified to Phosphothreonine. Lysine 120 is covalently cross-linked (Glycyl lysine isopeptide (Lys-Gly) (interchain with G-Cter in SUMO2)). Lysine 136 bears the N6-acetyllysine mark. Residues glycine 176–lysine 199 are disordered. The segment covering isoleucine 184–lysine 199 has biased composition (basic and acidic residues). Lysine 185 is covalently cross-linked (Glycyl lysine isopeptide (Lys-Gly) (interchain with G-Cter in SUMO1)). Position 197 is an N6-acetyllysine (lysine 197).

It belongs to the peroxiredoxin family. AhpC/Prx1 subfamily. In terms of assembly, homodimer; disulfide-linked, upon oxidation. 5 homodimers assemble to form a ring-like decamer. Interacts with GDPD5; forms a mixed-disulfide with GDPD5. Interacts with SESN1 and SESN2. Interacts with FAM107A. Post-translationally, phosphorylated on Thr-90 during the M-phase, which leads to a decrease in enzymatic activity. In terms of processing, acetylation increases reducing activity and resistance to superoxidation. Deacetylated by HDAC6 which decreases reducing activity.

The protein resides in the cytoplasm. It carries out the reaction a hydroperoxide + [thioredoxin]-dithiol = an alcohol + [thioredoxin]-disulfide + H2O. In terms of biological role, thiol-specific peroxidase that catalyzes the reduction of hydrogen peroxide and organic hydroperoxides to water and alcohols, respectively. Plays a role in cell protection against oxidative stress by detoxifying peroxides and as sensor of hydrogen peroxide-mediated signaling events. Might participate in the signaling cascades of growth factors and tumor necrosis factor-alpha by regulating the intracellular concentrations of H(2)O(2). Reduces an intramolecular disulfide bond in GDPD5 that gates the ability to GDPD5 to drive postmitotic motor neuron differentiation. This Cricetulus griseus (Chinese hamster) protein is Peroxiredoxin-1 (PRDX1).